A 71-amino-acid chain; its full sequence is Dermonecrotic toxin LgSicTox-alphaI-Loxn-A (71 aa).

His-12 is a catalytic residue. Mg(2+) contacts are provided by Glu-32, Asp-34, and Asp-48.

It depends on Mg(2+) as a cofactor. Post-translationally, contains 2 disulfide bonds. As to expression, expressed by the venom gland.

The protein resides in the secreted. It carries out the reaction an N-(acyl)-sphingosylphosphocholine = an N-(acyl)-sphingosyl-1,3-cyclic phosphate + choline. The enzyme catalyses an N-(acyl)-sphingosylphosphoethanolamine = an N-(acyl)-sphingosyl-1,3-cyclic phosphate + ethanolamine. The catalysed reaction is a 1-acyl-sn-glycero-3-phosphocholine = a 1-acyl-sn-glycero-2,3-cyclic phosphate + choline. It catalyses the reaction a 1-acyl-sn-glycero-3-phosphoethanolamine = a 1-acyl-sn-glycero-2,3-cyclic phosphate + ethanolamine. Functionally, catalyzes the hydrolysis of sphingomyelin. May also act on other phosphatidyl esters. Dermonecrotic toxins cleave the phosphodiester linkage between the phosphate and headgroup of certain phospholipids (sphingolipid and lysolipid substrates), forming an alcohol (often choline) and a cyclic phosphate. This toxin acts on sphingomyelin (SM). It may also act on ceramide phosphoethanolamine (CPE), lysophosphatidylcholine (LPC) and lysophosphatidylethanolamine (LPE), but not on lysophosphatidylserine (LPS), and lysophosphatidylglycerol (LPG). It acts by transphosphatidylation, releasing exclusively cyclic phosphate products as second products. In vivo, induces dermonecrosis, but is not lethal. Induces hemolysis, vascular permeability, edema, inflammatory response, and platelet aggregation. The protein is Dermonecrotic toxin LgSicTox-alphaI-Loxn-A of Loxosceles gaucho (Spider).